Consider the following 122-residue polypeptide: Large ribosomal subunit protein uL14 (122 aa).

Belongs to the universal ribosomal protein uL14 family. In terms of assembly, part of the 50S ribosomal subunit. Forms a cluster with proteins L3 and L19. In the 70S ribosome, L14 and L19 interact and together make contacts with the 16S rRNA in bridges B5 and B8.

In terms of biological role, binds to 23S rRNA. Forms part of two intersubunit bridges in the 70S ribosome. This Mycoplasma pneumoniae (strain ATCC 29342 / M129 / Subtype 1) (Mycoplasmoides pneumoniae) protein is Large ribosomal subunit protein uL14.